A 183-amino-acid polypeptide reads, in one-letter code: V-type ATP synthase subunit E (183 aa).

Belongs to the V-ATPase E subunit family.

In terms of biological role, produces ATP from ADP in the presence of a proton gradient across the membrane. The sequence is that of V-type ATP synthase subunit E from Fusobacterium nucleatum subsp. nucleatum (strain ATCC 25586 / DSM 15643 / BCRC 10681 / CIP 101130 / JCM 8532 / KCTC 2640 / LMG 13131 / VPI 4355).